The sequence spans 1168 residues: Myosin IC heavy chain (1168 aa).

The Myosin motor domain maps to 7 to 666 (HGVDDMVMLT…SVFSLEELRD (660 aa)). Residue 101-108 (GESGAGKT) coordinates ATP. S311 carries the phosphoserine modification. The actin-binding stretch occupies residues 542–564 (INILVATLSKCTPHYIRCIKPNE). In terms of domain architecture, TH1 spans 704–892 (KERRRLSLER…KVSVAPGLPP (189 aa)). Disordered stretches follow at residues 876–909 (DGKVKGTKVSVAPGLPPSSAPNIQAPQETSGGAS), 921–978 (ILGA…APGP), and 1036–1168 (AAAP…PPGM). Over residues 895–909 (APNIQAPQETSGGAS) the composition is skewed to polar residues. Gly residues-rich tracts occupy residues 924–939 (AKGGGGGGGRGRGGPS) and 950–959 (PGGGGGGPSP). Residues 960–978 (FGGRPSPSGPPAAASAPGP) show a composition bias toward low complexity. Positions 976 to 1035 (PGPEQARALYDFAAENPDELTFNEGAVVTVINKSNPDWWEGELNGQRGVFPASYVELIPR) constitute an SH3 domain. Pro residues predominate over residues 1040-1052 (APGPSGGPRPAPP). 2 stretches are compositionally biased toward gly residues: residues 1063-1083 (GGPGPMRGRGGPAPGGPGRGG) and 1090-1099 (GRAGPPGGRG). Over residues 1100-1112 (MPAPGGAAPRGRG) the composition is skewed to low complexity. The span at 1120–1141 (GPPGGGRGGAPPPGGMRGRGGP) shows a compositional bias: gly residues. A compositionally biased stretch (low complexity) spans 1152–1161 (GGMMPPRGRA).

It belongs to the TRAFAC class myosin-kinesin ATPase superfamily. Myosin family. In terms of assembly, myosin I heavy chain is single-headed. Dimer of a heavy and a light chain. Inability to self-assemble into filaments.

Myosin is a protein that binds to F-actin and has ATPase activity that is activated by F-actin. The polypeptide is Myosin IC heavy chain (MIC) (Acanthamoeba castellanii (Amoeba)).